A 946-amino-acid polypeptide reads, in one-letter code: Isoleucine--tRNA ligase (946 aa).

Residues Pro58–His68 carry the 'HIGH' region motif. Residue Glu568 participates in L-isoleucyl-5'-AMP binding. The short motif at Lys609–Ser613 is the 'KMSKS' region element. Lys612 provides a ligand contact to ATP. Positions 908, 911, 928, and 931 each coordinate Zn(2+).

It belongs to the class-I aminoacyl-tRNA synthetase family. IleS type 1 subfamily. Monomer. The cofactor is Zn(2+).

It is found in the cytoplasm. It carries out the reaction tRNA(Ile) + L-isoleucine + ATP = L-isoleucyl-tRNA(Ile) + AMP + diphosphate. Functionally, catalyzes the attachment of isoleucine to tRNA(Ile). As IleRS can inadvertently accommodate and process structurally similar amino acids such as valine, to avoid such errors it has two additional distinct tRNA(Ile)-dependent editing activities. One activity is designated as 'pretransfer' editing and involves the hydrolysis of activated Val-AMP. The other activity is designated 'posttransfer' editing and involves deacylation of mischarged Val-tRNA(Ile). The sequence is that of Isoleucine--tRNA ligase from Chromohalobacter salexigens (strain ATCC BAA-138 / DSM 3043 / CIP 106854 / NCIMB 13768 / 1H11).